The primary structure comprises 227 residues: Probable methylthioribulose-1-phosphate dehydratase (227 aa).

Cys87 is a substrate binding site. Residues His105 and His107 each contribute to the Zn(2+) site. Catalysis depends on Glu129, which acts as the Proton donor/acceptor. Zn(2+) is bound at residue His185.

It belongs to the aldolase class II family. MtnB subfamily. It depends on Zn(2+) as a cofactor.

The protein resides in the cytoplasm. It carries out the reaction 5-(methylsulfanyl)-D-ribulose 1-phosphate = 5-methylsulfanyl-2,3-dioxopentyl phosphate + H2O. It participates in amino-acid biosynthesis; L-methionine biosynthesis via salvage pathway; L-methionine from S-methyl-5-thio-alpha-D-ribose 1-phosphate: step 2/6. Functionally, catalyzes the dehydration of methylthioribulose-1-phosphate (MTRu-1-P) into 2,3-diketo-5-methylthiopentyl-1-phosphate (DK-MTP-1-P). The sequence is that of Probable methylthioribulose-1-phosphate dehydratase from Drosophila mojavensis (Fruit fly).